Consider the following 401-residue polypeptide: Probable tRNA sulfurtransferase (401 aa).

A THUMP domain is found at 60–165; the sequence is EPIIEKLKTV…QDGTYVTCRD (106 aa). ATP-binding positions include 183 to 184, 208 to 209, arginine 265, glycine 287, and glutamine 296; these read ML and HF.

The protein belongs to the ThiI family.

It localises to the cytoplasm. The enzyme catalyses [ThiI sulfur-carrier protein]-S-sulfanyl-L-cysteine + a uridine in tRNA + 2 reduced [2Fe-2S]-[ferredoxin] + ATP + H(+) = [ThiI sulfur-carrier protein]-L-cysteine + a 4-thiouridine in tRNA + 2 oxidized [2Fe-2S]-[ferredoxin] + AMP + diphosphate. It carries out the reaction [ThiS sulfur-carrier protein]-C-terminal Gly-Gly-AMP + S-sulfanyl-L-cysteinyl-[cysteine desulfurase] + AH2 = [ThiS sulfur-carrier protein]-C-terminal-Gly-aminoethanethioate + L-cysteinyl-[cysteine desulfurase] + A + AMP + 2 H(+). Its pathway is cofactor biosynthesis; thiamine diphosphate biosynthesis. Catalyzes the ATP-dependent transfer of a sulfur to tRNA to produce 4-thiouridine in position 8 of tRNAs, which functions as a near-UV photosensor. Also catalyzes the transfer of sulfur to the sulfur carrier protein ThiS, forming ThiS-thiocarboxylate. This is a step in the synthesis of thiazole, in the thiamine biosynthesis pathway. The sulfur is donated as persulfide by IscS. The polypeptide is Probable tRNA sulfurtransferase (Geobacillus kaustophilus (strain HTA426)).